Here is an 827-residue protein sequence, read N- to C-terminus: DNA ligase (827 aa).

NAD(+) is bound by residues 45 to 49 (DAAYD), 94 to 95 (SL), and glutamate 128. Catalysis depends on lysine 130, which acts as the N6-AMP-lysine intermediate. The NAD(+) site is built by arginine 151, glutamate 188, lysine 304, and lysine 328. Zn(2+) contacts are provided by cysteine 451, cysteine 454, cysteine 475, and cysteine 481. A BRCT domain is found at 748–827 (AAAAAFSGRT…AEWLAMVEAA (80 aa)).

The protein belongs to the NAD-dependent DNA ligase family. LigA subfamily. Mg(2+) is required as a cofactor. It depends on Mn(2+) as a cofactor.

It catalyses the reaction NAD(+) + (deoxyribonucleotide)n-3'-hydroxyl + 5'-phospho-(deoxyribonucleotide)m = (deoxyribonucleotide)n+m + AMP + beta-nicotinamide D-nucleotide.. Its function is as follows. DNA ligase that catalyzes the formation of phosphodiester linkages between 5'-phosphoryl and 3'-hydroxyl groups in double-stranded DNA using NAD as a coenzyme and as the energy source for the reaction. It is essential for DNA replication and repair of damaged DNA. The chain is DNA ligase from Methylobacterium sp. (strain 4-46).